We begin with the raw amino-acid sequence, 461 residues long: Asparagine--tRNA ligase (461 aa).

Belongs to the class-II aminoacyl-tRNA synthetase family. Homodimer.

The protein localises to the cytoplasm. It catalyses the reaction tRNA(Asn) + L-asparagine + ATP = L-asparaginyl-tRNA(Asn) + AMP + diphosphate + H(+). The chain is Asparagine--tRNA ligase from Solibacter usitatus (strain Ellin6076).